Reading from the N-terminus, the 112-residue chain is Large ribosomal subunit protein bL17 (112 aa).

The protein belongs to the bacterial ribosomal protein bL17 family. Part of the 50S ribosomal subunit. Contacts protein L32.

The sequence is that of Large ribosomal subunit protein bL17 from Desulfitobacterium hafniense (strain DSM 10664 / DCB-2).